Consider the following 254-residue polypeptide: DNA repair protein RecO (254 aa).

This sequence belongs to the RecO family.

In terms of biological role, involved in DNA repair and RecF pathway recombination. In Anaeromyxobacter sp. (strain K), this protein is DNA repair protein RecO.